Reading from the N-terminus, the 440-residue chain is tRNA(Ile)-lysidine synthase (440 aa).

ATP is bound at residue 31–36; that stretch reads SGGADS.

This sequence belongs to the tRNA(Ile)-lysidine synthase family.

It localises to the cytoplasm. The enzyme catalyses cytidine(34) in tRNA(Ile2) + L-lysine + ATP = lysidine(34) in tRNA(Ile2) + AMP + diphosphate + H(+). Ligates lysine onto the cytidine present at position 34 of the AUA codon-specific tRNA(Ile) that contains the anticodon CAU, in an ATP-dependent manner. Cytidine is converted to lysidine, thus changing the amino acid specificity of the tRNA from methionine to isoleucine. This is tRNA(Ile)-lysidine synthase from Borreliella burgdorferi (strain ATCC 35210 / DSM 4680 / CIP 102532 / B31) (Borrelia burgdorferi).